A 491-amino-acid polypeptide reads, in one-letter code: Limb region 1 homolog-like protein (491 aa).

Residues 1–20 lie on the Extracellular side of the membrane; sequence METEDVTVREQIFHDRVRET. A helical membrane pass occupies residues 21 to 41; it reads IICVLLFICLYILSHFILTHF. The Cytoplasmic portion of the chain corresponds to 42 to 59; the sequence is KKSAEFVTDDIEDATVNK. The helical transmembrane segment at 60–80 threads the bilayer; the sequence is IALWLCTFTLSVAVCAVLLLP. Topologically, residues 81-111 are extracellular; sequence ISILSNEVLLTFPHSYYMQWLNGSLIRGLWN. The chain crosses the membrane as a helical span at residues 112–132; it reads LVFLFSNLSLVFLMPFAYFFT. Topologically, residues 133–152 are cytoplasmic; sequence ESEGFAGSKKGVMARVYETA. The chain crosses the membrane as a helical span at residues 153-173; sequence VMLLLLSLLVLGIVWVASALL. The Extracellular segment spans residues 174-192; that stretch reads HHNTARESLYDLWEYYLPY. Residues 193-213 traverse the membrane as a helical segment; sequence LYSGISLFGVLLLLLCTPFGL. Residues 214 to 292 lie on the Cytoplasmic side of the membrane; the sequence is SRMFSVTGSL…RKRASPWQRN (79 aa). The chain crosses the membrane as a helical span at residues 293–313; sequence LVYPVAMLLLLALTAVSVLMV. Residues 314–346 are Extracellular-facing; sequence CFHVLELLFDESAMPRGMEDPHLGLASFSMLGS. Residues 347–367 form a helical membrane-spanning segment; that stretch reads LGAAVQVVIILYLMVSSVVGF. Topologically, residues 368–384 are cytoplasmic; the sequence is YSSPLFTGLLPRAQDTT. The helical transmembrane segment at 385–405 threads the bilayer; the sequence is LTQIIGNCVSLLILSSALPVF. Over 406 to 427 the chain is Extracellular; sequence SRTLGITKFDLLGDFGRHDWLG. Residues 428–448 form a helical membrane-spanning segment; it reads SFHIVFLYNMLFAGLTSACLI. Topologically, residues 449-491 are cytoplasmic; that stretch reads NTVTWALQRELIRAFGLHRLPLTVSRSTIPLKLLLANGLSKIH.

It belongs to the LIMR family. In terms of assembly, dimer. Can also form higher oligomers.

It localises to the cell membrane. It is found in the endoplasmic reticulum membrane. May play a role in lymphocyte development by negatively regulating the canonical Wnt signaling pathway. May act as a LCN1 receptor. The sequence is that of Limb region 1 homolog-like protein (lmbr1l) from Danio rerio (Zebrafish).